The sequence spans 138 residues: MATLQCRVVSAREEIYAGEISMLIATGSEGEVGILAGHTPLITLLKPGSMRIQTPDGNEEVIYVSGGVLEVQPKLVTVLADTAVRAHDLDEAKIVEARKKAEQMLANQTETLQTNAALASLAESVAQLQTIRKYRNRA.

This sequence belongs to the ATPase epsilon chain family. F-type ATPases have 2 components, CF(1) - the catalytic core - and CF(0) - the membrane proton channel. CF(1) has five subunits: alpha(3), beta(3), gamma(1), delta(1), epsilon(1). CF(0) has three main subunits: a, b and c.

It localises to the cell inner membrane. Produces ATP from ADP in the presence of a proton gradient across the membrane. The polypeptide is ATP synthase epsilon chain (Psychrobacter sp. (strain PRwf-1)).